The chain runs to 489 residues: NF-kappa-B inhibitor cactus (489 aa).

Over residues 1 to 26 (MPSPTKAAEAATKATATSDCSCSAAS) the composition is skewed to low complexity. 2 disordered regions span residues 1-138 (MPSP…SMRL) and 163-203 (NNLG…APPS). A Phosphoserine; by PKC modification is found at Ser-45. The span at 69–86 (NETSDSGFISGPQSSQIC) shows a compositional bias: polar residues. Ser-135 carries the phosphoserine; by PKC modification. Residues 163 to 180 (NNLGQSSSTQITGRSKFQ) are compositionally biased toward polar residues. The residue at position 174 (Thr-174) is a Phosphothreonine; by PKC. The span at 181–203 (SSTASTANANPSGXGATSSAPPS) shows a compositional bias: low complexity. 5 ANK repeats span residues 220-252 (DGDT…LLNI), 256-285 (VAQT…EVRD), 287-316 (HGNT…ATEI), 350-379 (DGER…DINA), and 384-413 (SGRT…KLNL). Thr-308 is modified (phosphothreonine; by PKC). Phosphoserine; by PKC is present on Ser-384.

The protein resides in the cytoplasm. Involved in the formation of the dorsoventral pattern. It inhibits nuclear translocation of the dorsal morphogen in the dorsal region of the embryo. In Drosophila yakuba (Fruit fly), this protein is NF-kappa-B inhibitor cactus (cact).